The primary structure comprises 403 residues: Tyrosine--tRNA ligase (403 aa).

The 'HIGH' region motif lies at 42–51 (PTAPDLHLGH). The 'KMSKS' region motif lies at 226 to 230 (KMSKS). An ATP-binding site is contributed by K229. The S4 RNA-binding domain maps to 339–400 (LRIASLLTAA…GKRNFARVAL (62 aa)).

This sequence belongs to the class-I aminoacyl-tRNA synthetase family. TyrS type 2 subfamily. In terms of assembly, homodimer.

Its subcellular location is the cytoplasm. The catalysed reaction is tRNA(Tyr) + L-tyrosine + ATP = L-tyrosyl-tRNA(Tyr) + AMP + diphosphate + H(+). Its function is as follows. Catalyzes the attachment of tyrosine to tRNA(Tyr) in a two-step reaction: tyrosine is first activated by ATP to form Tyr-AMP and then transferred to the acceptor end of tRNA(Tyr). In Xanthomonas campestris pv. campestris (strain ATCC 33913 / DSM 3586 / NCPPB 528 / LMG 568 / P 25), this protein is Tyrosine--tRNA ligase.